A 418-amino-acid chain; its full sequence is F-box/kelch-repeat protein SKIP20 (418 aa).

Residues Asp-14–Gly-61 enclose the F-box domain. Residues Pro-79–Thr-104 are disordered. 4 Kelch repeats span residues Thr-104 to Asp-150, Lys-153 to Ser-206, Lys-208 to Thr-255, and Gly-258 to Gly-314.

As to quaternary structure, part of a SCF (ASK-cullin-F-box) protein ligase complex. Interacts with SKP1A/ASK1 and SPK1B/ASK2.

The protein resides in the nucleus. Its pathway is protein modification; protein ubiquitination. In terms of biological role, component of SCF(ASK-cullin-F-box) E3 ubiquitin ligase complexes, which may mediate the ubiquitination and subsequent proteasomal degradation of target proteins. This Arabidopsis thaliana (Mouse-ear cress) protein is F-box/kelch-repeat protein SKIP20 (SKIP20).